A 153-amino-acid polypeptide reads, in one-letter code: MLLRDLVPRHGCCWPSLLLHCALHPLWGLVQVTHAEPQKSCSKVTDSCQHICQCRPPPPLPPPPPPPPPPRLLSAPAPNSTSCPAEDSWWSGLVIIVAVVCASLVFLTVLVIICYKAIKRKPLRKDENGTSVAEYPMSSSQSHKGVDVNAAVV.

The N-terminal stretch at 1–35 is a signal peptide; that stretch reads MLLRDLVPRHGCCWPSLLLHCALHPLWGLVQVTHA. The Extracellular portion of the chain corresponds to 36-92; that stretch reads EPQKSCSKVTDSCQHICQCRPPPPLPPPPPPPPPPRLLSAPAPNSTSCPAEDSWWSG. A PRAD domain is found at 56–70; that stretch reads PPPPLPPPPPPPPPP. A compositionally biased stretch (pro residues) spans 59–71; the sequence is PLPPPPPPPPPPR. A disordered region spans residues 59–79; that stretch reads PLPPPPPPPPPPRLLSAPAPN. An N-linked (GlcNAc...) asparagine glycan is attached at Asn79. The helical transmembrane segment at 93 to 113 threads the bilayer; it reads LVIIVAVVCASLVFLTVLVII. Topologically, residues 114 to 153 are cytoplasmic; it reads CYKAIKRKPLRKDENGTSVAEYPMSSSQSHKGVDVNAAVV. The segment at 129–153 is disordered; that stretch reads GTSVAEYPMSSSQSHKGVDVNAAVV.

In terms of assembly, interacts with ACHE, probably through disulfide bonds. Predominantly expressed in the central nervous system, including in the brain. Also expressed in muscle, heart and kidney. Isoform 1 may be predominant in the cortex and striatum, while isoform 2 is more abundant in the cerebellum.

The protein localises to the cell membrane. Its subcellular location is the cell junction. The protein resides in the synapse. In terms of biological role, required to anchor acetylcholinesterase (ACHE) to the basal lamina of the neuromuscular junction and to the membrane of neuronal synapses in brain. Also able to organize ACHE into tetramers. In Mus musculus (Mouse), this protein is Proline-rich membrane anchor 1 (Prima1).